Here is an 87-residue protein sequence, read N- to C-terminus: Small ribosomal subunit protein bS16 (87 aa).

The protein belongs to the bacterial ribosomal protein bS16 family.

This is Small ribosomal subunit protein bS16 from Variovorax paradoxus (strain S110).